The following is a 173-amino-acid chain: Ribosome maturation factor RimM (173 aa).

In terms of domain architecture, PRC barrel spans 97-171 (EGEFFYHEII…QITIEPMEGL (75 aa)).

This sequence belongs to the RimM family. As to quaternary structure, binds ribosomal protein uS19.

It is found in the cytoplasm. Functionally, an accessory protein needed during the final step in the assembly of 30S ribosomal subunit, possibly for assembly of the head region. Essential for efficient processing of 16S rRNA. May be needed both before and after RbfA during the maturation of 16S rRNA. It has affinity for free ribosomal 30S subunits but not for 70S ribosomes. The polypeptide is Ribosome maturation factor RimM (Halalkalibacterium halodurans (strain ATCC BAA-125 / DSM 18197 / FERM 7344 / JCM 9153 / C-125) (Bacillus halodurans)).